Reading from the N-terminus, the 988-residue chain is Transposase for transposon Tn21 (988 aa).

The interval 672–696 (GDGTTSSSDEQNFRTASKAKSTGHI) is disordered. Polar residues predominate over residues 674–695 (GTTSSSDEQNFRTASKAKSTGH).

The protein belongs to the transposase 7 family.

Required for transposition of transposon Tn21. The sequence is that of Transposase for transposon Tn21 (tnpA) from Escherichia coli.